Here is a 320-residue protein sequence, read N- to C-terminus: Phosphate acyltransferase (320 aa).

Belongs to the PlsX family. As to quaternary structure, homodimer. Probably interacts with PlsY.

Its subcellular location is the cytoplasm. It carries out the reaction a fatty acyl-[ACP] + phosphate = an acyl phosphate + holo-[ACP]. It functions in the pathway lipid metabolism; phospholipid metabolism. Its function is as follows. Catalyzes the reversible formation of acyl-phosphate (acyl-PO(4)) from acyl-[acyl-carrier-protein] (acyl-ACP). This enzyme utilizes acyl-ACP as fatty acyl donor, but not acyl-CoA. This chain is Phosphate acyltransferase, found in Chlamydia pneumoniae (Chlamydophila pneumoniae).